We begin with the raw amino-acid sequence, 160 residues long: Endoribonuclease YbeY (160 aa).

Residues histidine 112, histidine 116, and histidine 122 each coordinate Zn(2+).

It belongs to the endoribonuclease YbeY family. Requires Zn(2+) as cofactor.

It is found in the cytoplasm. Functionally, single strand-specific metallo-endoribonuclease involved in late-stage 70S ribosome quality control and in maturation of the 3' terminus of the 16S rRNA. The chain is Endoribonuclease YbeY from Maricaulis maris (strain MCS10) (Caulobacter maris).